The sequence spans 168 residues: MSTPAKRRLMRDFKRMQQDAPSGVSASPLPDNVMSWNAVIIGPADTPFEDGTFRLILQFDEQYPNKPPSVKFISEMFHPNVYASGELCLDILQNRWSPTYDVSSILTSIQSLLNDPNISSPANVEAANLYKDHRSQYIKRVRETVENSWNEDDEDEDEDEDEDIDDAE.

The UBC core domain occupies 4–150 (PAKRRLMRDF…VRETVENSWN (147 aa)). The active-site Glycyl thioester intermediate is Cys88. The tract at residues 143 to 168 (ETVENSWNEDDEDEDEDEDEDIDDAE) is disordered. A compositionally biased stretch (acidic residues) spans 149–168 (WNEDDEDEDEDEDEDIDDAE).

Belongs to the ubiquitin-conjugating enzyme family.

Its subcellular location is the cytoplasm. The protein resides in the nucleus. The catalysed reaction is S-ubiquitinyl-[E1 ubiquitin-activating enzyme]-L-cysteine + [E2 ubiquitin-conjugating enzyme]-L-cysteine = [E1 ubiquitin-activating enzyme]-L-cysteine + S-ubiquitinyl-[E2 ubiquitin-conjugating enzyme]-L-cysteine.. It participates in protein modification; protein ubiquitination. Its function is as follows. Catalyzes the covalent attachment of ubiquitin to other proteins. Plays a role in transcription regulation by catalyzing the monoubiquitination of histone H2B to form H2BK123ub1. H2BK123ub1 gives a specific tag for epigenetic transcriptional activation and is also a prerequisite for H3K4me and H3K79me formation. Also involved in postreplication repair of UV-damaged DNA, in N-end rule-dependent protein degradation and in sporulation. In Debaryomyces hansenii (strain ATCC 36239 / CBS 767 / BCRC 21394 / JCM 1990 / NBRC 0083 / IGC 2968) (Yeast), this protein is Ubiquitin-conjugating enzyme E2 2 (UBC2).